We begin with the raw amino-acid sequence, 463 residues long: Vacuolar cation/proton exchanger 1 (463 aa).

Residue A2 is modified to N-acetylalanine. At 2–68 the chain is on the cytoplasmic side; sequence AGIVTEPWSV…LKDFLSNLQE (67 aa). The interval 25 to 33 is required for autoinhibitory regulation; it reads SRELRLGRT. Positions 56-62 are required for interaction with autoinhibitory region; the sequence is YKGLKDF. The chain crosses the membrane as a helical span at residues 69–89; it reads VILGTKLAILFPAIPAAIICT. The segment at 87–95 is required for Ca(2+)/H(+) exchange activity; it reads ICTYCGVSQ. Over 90–96 the chain is Extracellular; it reads YCGVSQP. A helical membrane pass occupies residues 97-116; that stretch reads WIFGLSLLGLTPLAERVSFL. Over 117–127 the chain is Cytoplasmic; that stretch reads TEQLAFYTGPT. A helical membrane pass occupies residues 128 to 148; it reads LGGLLNATCGNATELIIAILA. The segment at 137–172 is cation selection; sequence GNATELIIAILALTNNKVAVVKYSLLGSILSNLLLV. The Extracellular portion of the chain corresponds to 149-161; it reads LTNNKVAVVKYSL. The chain crosses the membrane as a helical span at residues 162–182; that stretch reads LGSILSNLLLVLGTSLFCGGI. At 183 to 197 the chain is on the cytoplasmic side; the sequence is ANIRREQRFDRKQAD. The chain crosses the membrane as a helical span at residues 198 to 218; that stretch reads VNFFLLLLGFLCHLLPLLVGY. The Extracellular portion of the chain corresponds to 219-238; it reads LKNGEASAAVLSDMQLSISR. Residues 239–259 form a helical membrane-spanning segment; it reads GFSIVMLISYIAYLVFQLWTH. At 260-281 the chain is on the cytoplasmic side; that stretch reads RQLFDAQEQEDEYDDDVEQETA. The chain crosses the membrane as a helical span at residues 282–302; the sequence is VISFWSGFAWLVGMTLVIALL. At 303–325 the chain is on the extracellular side; that stretch reads SEYVVATIEEASDKWNLSVSFIS. N-linked (GlcNAc...) asparagine glycosylation occurs at N318. Residues 326–346 form a helical membrane-spanning segment; it reads IILLPIVGNAAEHAGAVIFAF. The tract at residues 333–368 is cation selection; the sequence is GNAAEHAGAVIFAFKNKLDISLGVALGSATQIGLFV. Residues 347–360 are Cytoplasmic-facing; the sequence is KNKLDISLGVALGS. A helical transmembrane segment spans residues 361–381; sequence ATQIGLFVVPLTIIVAWILGI. Topologically, residues 382–384 are extracellular; it reads NMD. A helical membrane pass occupies residues 385–405; the sequence is LNFGPLETGCLAVSIIITAFT. The Cytoplasmic segment spans residues 406-411; sequence LQDGSS. A helical membrane pass occupies residues 412–432; it reads HYMKGLVLLLCYFIIAICFFV. Residues 433–463 are Extracellular-facing; that stretch reads DKLPQKQNAIHLGHQAMNNVVTATGGGVFSS.

It belongs to the Ca(2+):cation antiporter (CaCA) (TC 2.A.19) family. Cation/proton exchanger (CAX) subfamily. As to quaternary structure, interacts with GRXS14 and CXIP4. As to expression, expressed at low levels in leaves, stems and flowers.

It is found in the vacuole membrane. Its activity is regulated as follows. Activated by monothiol glutaredoxin GRXS14 and CXIP4. Inhibited by excess of Ca(2+) and Cd(2+), Na(+) and K(+), but not Mn(2+). Functionally, vacuolar cation/proton exchanger (CAX). Translocates Ca(2+) and other metal ions into vacuoles using the proton gradient formed by H(+)-ATPase and H(+)-pyrophosphatase. Involved in ion homeostasis in association with CAX3. May play a role in cold-acclimation response. This chain is Vacuolar cation/proton exchanger 1 (CAX1), found in Arabidopsis thaliana (Mouse-ear cress).